The following is a 334-amino-acid chain: Biotin synthase (334 aa).

A Radical SAM core domain is found at 48-275 (NQVQTSQLLS…RSMVRLSAGR (228 aa)). Residues Cys63, Cys67, and Cys70 each contribute to the [4Fe-4S] cluster site. Residues Cys107, Cys138, Cys198, and Arg270 each coordinate [2Fe-2S] cluster.

It belongs to the radical SAM superfamily. Biotin synthase family. In terms of assembly, homodimer. [4Fe-4S] cluster serves as cofactor. Requires [2Fe-2S] cluster as cofactor.

It carries out the reaction (4R,5S)-dethiobiotin + (sulfur carrier)-SH + 2 reduced [2Fe-2S]-[ferredoxin] + 2 S-adenosyl-L-methionine = (sulfur carrier)-H + biotin + 2 5'-deoxyadenosine + 2 L-methionine + 2 oxidized [2Fe-2S]-[ferredoxin]. It participates in cofactor biosynthesis; biotin biosynthesis; biotin from 7,8-diaminononanoate: step 2/2. Functionally, catalyzes the conversion of dethiobiotin (DTB) to biotin by the insertion of a sulfur atom into dethiobiotin via a radical-based mechanism. In Maricaulis maris (strain MCS10) (Caulobacter maris), this protein is Biotin synthase.